Here is a 276-residue protein sequence, read N- to C-terminus: Natural cytotoxicity triggering receptor 2 (276 aa).

Positions 1-21 (MAWRALHPLLLLLLLFPGSQA) are cleaved as a signal peptide. Positions 22–120 (QSKAQVLQSV…IYRPSDNSVS (99 aa)) constitute an Ig-like domain. Residues 22 to 192 (QSKAQVLQSV…LRPGPAAPIA (171 aa)) lie on the Extracellular side of the membrane. 2 cysteine pairs are disulfide-bonded: Cys40-Cys109 and Cys55-Cys63. Composition is skewed to polar residues over residues 138–156 (TSWT…QSCV) and 167–183 (ESPS…NSTL). The tract at residues 138 to 184 (TSWTPRDLVSSQTQTQSCVPPTAGARQAPESPSTIPVPSQPQNSTLR) is disordered. Asn180 is a glycosylation site (N-linked (GlcNAc...) asparagine). The helical transmembrane segment at 193–213 (LVPVFCGLLVAKSLVLSALLV) threads the bilayer. Over 214 to 276 (WWGDIWWKTM…ISDDDDEHTL (63 aa)) the chain is Cytoplasmic.

The protein belongs to the natural cytotoxicity receptor (NCR) family. As to quaternary structure, interacts with TYROBP/DAP12. Interacts with KMT2E isoform NKp44L. Selectively expressed by activated NK cells and by in vitro cultured (i.e. activated) TCRg/d lymphoid cells.

The protein localises to the cell membrane. Functionally, cytotoxicity-activating receptor that may contribute to the increased efficiency of activated natural killer (NK) cells to mediate tumor cell lysis. The protein is Natural cytotoxicity triggering receptor 2 (NCR2) of Homo sapiens (Human).